A 530-amino-acid polypeptide reads, in one-letter code: Glucocorticoid modulatory element-binding protein 2 (530 aa).

The SAND domain occupies 81 to 163 (EEGENLEAEI…RKIMDSGELD (83 aa)). Zn(2+) is bound at residue C110. DNA-binding residues include K136, K140, K143, and R154. K155 participates in a covalent cross-link: Glycyl lysine isopeptide (Lys-Gly) (interchain with G-Cter in SUMO1); alternate. A Glycyl lysine isopeptide (Lys-Gly) (interchain with G-Cter in SUMO2); alternate cross-link involves residue K155. Zn(2+)-binding residues include H167, C171, and C175. Coiled-coil stretches lie at residues 245 to 270 (LLDEVIQEFQQELEETMKGLQQRVQD) and 304 to 344 (QMDR…SNVL). S373 bears the Phosphoserine mark.

Homodimer, and heterodimer of GMEB1 and GMEB2. Interacts with the glucocorticoid receptor (NR3C1). May interact with CREB-binding protein (CBP).

Its subcellular location is the nucleus. The protein localises to the cytoplasm. In terms of biological role, trans-acting factor that binds to glucocorticoid modulatory elements (GME) present in the TAT (tyrosine aminotransferase) promoter and increases sensitivity to low concentrations of glucocorticoids. Also binds to the transferrin receptor promoter. The chain is Glucocorticoid modulatory element-binding protein 2 (Gmeb2) from Mus musculus (Mouse).